A 124-amino-acid chain; its full sequence is uncharacterized protein (124 aa).

An N-terminal signal peptide occupies residues 1 to 22 (MGTSSVLLMIASSLILLEVVMT).

This is an uncharacterized protein from Caenorhabditis elegans.